We begin with the raw amino-acid sequence, 101 residues long: Urease subunit beta (101 aa).

It belongs to the urease beta subunit family. Heterotrimer of UreA (gamma), UreB (beta) and UreC (alpha) subunits. Three heterotrimers associate to form the active enzyme.

It localises to the cytoplasm. The catalysed reaction is urea + 2 H2O + H(+) = hydrogencarbonate + 2 NH4(+). It functions in the pathway nitrogen metabolism; urea degradation; CO(2) and NH(3) from urea (urease route): step 1/1. The chain is Urease subunit beta from Saccharophagus degradans (strain 2-40 / ATCC 43961 / DSM 17024).